A 110-amino-acid polypeptide reads, in one-letter code: Carboxysome shell protein CsoS1B (110 aa).

The BMC domain maps to 8–93; the sequence is ALGMIETRGL…VHSEVEIILP (86 aa).

This sequence belongs to the bacterial microcompartments protein family. CsoS1 subfamily. Homohexamer with a small central pore. Interacts with the N-terminus (residues 1-136) of RuBisCO (CbbL).

The protein localises to the carboxysome. One of shell proteins of the carboxysome, a polyhedral inclusion where RuBisCO (ribulose bisphosphate carboxylase, ccbL-ccbS) is sequestered. Assembles into hexamers which make sheets that form the facets of the polyhedral carboxysome. The shell probably limits the diffusion of CO(2) into and out of the carboxysome. There are estimated to be 540 CsoS1B proteins per carboxysome. Functionally, unlike beta-carboxysomes, alpha-carboxysomes (Cb) can form without cargo protein. CsoS2 is essential for Cb formation and is also capable of targeting foreign proteins to the Cb. The Cb shell assembles with the aid of CsoS2; CsoS1A, CsoS1B and CsoS1C form the majority of the shell while CsoS4A and CsoS4B form vertices. CsoS1D forms pseudohexamers that probably control metabolite flux into and out of the shell. In Halothiobacillus neapolitanus (strain ATCC 23641 / c2) (Thiobacillus neapolitanus), this protein is Carboxysome shell protein CsoS1B.